The primary structure comprises 722 residues: Golgin subfamily A member 5 (722 aa).

Topologically, residues 1 to 689 are cytoplasmic; sequence MSWFTDLAGR…IFLRRYPIAR (689 aa). Disordered stretches follow at residues 90–158 and 194–215; these read TRSS…VKPI and TLSDSGSSASLSTTGDPKSHEL. Positions 91–109 are enriched in low complexity; sequence RSSIESSHNSSVNVSSHRS. The span at 134-148 shows a compositional bias: basic and acidic residues; that stretch reads DKVHSSSQKETRKES. The span at 149 to 158 shows a compositional bias: polar residues; it reads ASVNQAVKPI. Residues 195-209 are compositionally biased toward low complexity; sequence LSDSGSSASLSTTGD. Positions 211–622 form a coiled coil; sequence KSHELSNLRL…LEHQLKNVQG (412 aa). The chain crosses the membrane as a helical; Anchor for type IV membrane protein span at residues 690–710; sequence VFIIIYMALLHLWVMIVLLTY. At 711–722 the chain is on the lumenal side; the sequence is TPEMHHDTPSGK.

The protein localises to the golgi apparatus membrane. Its function is as follows. Involved in maintaining Golgi structure. Stimulates the formation of Golgi stacks and ribbons. Involved in intra-Golgi retrograde transport. This is Golgin subfamily A member 5 (golga5) from Xenopus laevis (African clawed frog).